The following is a 37-amino-acid chain: Cytochrome b6-f complex subunit 7 (37 aa).

Residues 11–29 traverse the membrane as a helical segment; that stretch reads AVLLMVLVLVGLAWGFLLL.

This sequence belongs to the PetM family. The 4 large subunits of the cytochrome b6-f complex are cytochrome b6, subunit IV (17 kDa polypeptide, PetD), cytochrome f and the Rieske protein, while the 4 small subunits are PetG, PetL, PetM and PetN. The complex functions as a dimer.

Its subcellular location is the cellular thylakoid membrane. Its function is as follows. Component of the cytochrome b6-f complex, which mediates electron transfer between photosystem II (PSII) and photosystem I (PSI), cyclic electron flow around PSI, and state transitions. This is Cytochrome b6-f complex subunit 7 from Rippkaea orientalis (strain PCC 8801 / RF-1) (Cyanothece sp. (strain PCC 8801)).